We begin with the raw amino-acid sequence, 557 residues long: Aerobic glycerol-3-phosphate dehydrogenase (557 aa).

Residue Asp-21–Glu-49 participates in FAD binding.

Belongs to the FAD-dependent glycerol-3-phosphate dehydrogenase family. The cofactor is FAD.

Its subcellular location is the cytoplasm. It carries out the reaction a quinone + sn-glycerol 3-phosphate = dihydroxyacetone phosphate + a quinol. It participates in polyol metabolism; glycerol degradation via glycerol kinase pathway; glycerone phosphate from sn-glycerol 3-phosphate (aerobic route): step 1/1. This Staphylococcus aureus (strain USA300) protein is Aerobic glycerol-3-phosphate dehydrogenase (glpD).